The primary structure comprises 110 residues: Large ribosomal subunit protein uL22 (110 aa).

The protein belongs to the universal ribosomal protein uL22 family. Part of the 50S ribosomal subunit.

In terms of biological role, this protein binds specifically to 23S rRNA; its binding is stimulated by other ribosomal proteins, e.g. L4, L17, and L20. It is important during the early stages of 50S assembly. It makes multiple contacts with different domains of the 23S rRNA in the assembled 50S subunit and ribosome. Functionally, the globular domain of the protein is located near the polypeptide exit tunnel on the outside of the subunit, while an extended beta-hairpin is found that lines the wall of the exit tunnel in the center of the 70S ribosome. The sequence is that of Large ribosomal subunit protein uL22 from Pectobacterium atrosepticum (strain SCRI 1043 / ATCC BAA-672) (Erwinia carotovora subsp. atroseptica).